We begin with the raw amino-acid sequence, 246 residues long: Carboxylesterase (246 aa).

Catalysis depends on serine 93, which acts as the Nucleophile. Residues aspartate 192 and histidine 222 each act as charge relay system in the active site.

This sequence belongs to the lipase/esterase LIP3/BchO family. Homodimer.

The enzyme catalyses a carboxylic ester + H2O = an alcohol + a carboxylate + H(+). Its function is as follows. Involved in the detoxification of xenobiotics. Shows maximal activity with C6 substrates, with gradually decreasing activity from C8 to C12 substrates. No activity for higher chain length substrates acids rather than long-chain ones. The sequence is that of Carboxylesterase (est) from Geobacillus stearothermophilus (Bacillus stearothermophilus).